Here is a 327-residue protein sequence, read N- to C-terminus: DNA-directed RNA polymerase subunit alpha (327 aa).

The alpha N-terminal domain (alpha-NTD) stretch occupies residues 1–233 (MQNVLKSFLT…HQLAAFVDLK (233 aa)). The interval 247–327 (VNPLLLRPVE…GWPPADLTDQ (81 aa)) is alpha C-terminal domain (alpha-CTD).

Belongs to the RNA polymerase alpha chain family. As to quaternary structure, homodimer. The RNAP catalytic core consists of 2 alpha, 1 beta, 1 beta' and 1 omega subunit. When a sigma factor is associated with the core the holoenzyme is formed, which can initiate transcription.

It carries out the reaction RNA(n) + a ribonucleoside 5'-triphosphate = RNA(n+1) + diphosphate. Functionally, DNA-dependent RNA polymerase catalyzes the transcription of DNA into RNA using the four ribonucleoside triphosphates as substrates. In Coxiella burnetii (strain CbuK_Q154) (Coxiella burnetii (strain Q154)), this protein is DNA-directed RNA polymerase subunit alpha.